Consider the following 435-residue polypeptide: Elongation factor 1-alpha (435 aa).

One can recognise a tr-type G domain in the interval 4–229; it reads KPHLNLIVIG…DQLEIPPKPV (226 aa). The interval 13 to 20 is G1; sequence GHVDHGKS. 13 to 20 provides a ligand contact to GTP; that stretch reads GHVDHGKS. A Mg(2+)-binding site is contributed by Ser-20. A G2 region spans residues 69–73; that stretch reads GVTIN. The tract at residues 90–93 is G3; it reads DAPG. GTP contacts are provided by residues 90-94 and 152-155; these read DAPGH and NKMD. A G4 region spans residues 152 to 155; the sequence is NKMD. Residues 193-195 form a G5 region; that stretch reads VAP.

The protein belongs to the TRAFAC class translation factor GTPase superfamily. Classic translation factor GTPase family. EF-Tu/EF-1A subfamily.

It is found in the cytoplasm. It catalyses the reaction GTP + H2O = GDP + phosphate + H(+). Functionally, GTP hydrolase that promotes the GTP-dependent binding of aminoacyl-tRNA to the A-site of ribosomes during protein biosynthesis. The protein is Elongation factor 1-alpha of Sulfurisphaera tokodaii (strain DSM 16993 / JCM 10545 / NBRC 100140 / 7) (Sulfolobus tokodaii).